Here is a 432-residue protein sequence, read N- to C-terminus: UDP-N-acetylmuramate--L-alanine ligase (432 aa).

ATP is bound at residue 108–114 (GAHGKTS).

This sequence belongs to the MurCDEF family.

The protein resides in the cytoplasm. It carries out the reaction UDP-N-acetyl-alpha-D-muramate + L-alanine + ATP = UDP-N-acetyl-alpha-D-muramoyl-L-alanine + ADP + phosphate + H(+). The protein operates within cell wall biogenesis; peptidoglycan biosynthesis. Cell wall formation. The protein is UDP-N-acetylmuramate--L-alanine ligase of Bacillus licheniformis (strain ATCC 14580 / DSM 13 / JCM 2505 / CCUG 7422 / NBRC 12200 / NCIMB 9375 / NCTC 10341 / NRRL NRS-1264 / Gibson 46).